The chain runs to 410 residues: Argininosuccinate synthase (410 aa).

An ATP-binding site is contributed by 10–18 (AYSGGLDTS). L-citrulline contacts are provided by Y88 and S93. Residue G118 participates in ATP binding. Positions 120, 124, and 125 each coordinate L-aspartate. An L-citrulline-binding site is contributed by N124. The L-citrulline site is built by R128, S177, S186, E262, and Y274.

Belongs to the argininosuccinate synthase family. Type 1 subfamily. In terms of assembly, homotetramer.

It localises to the cytoplasm. It catalyses the reaction L-citrulline + L-aspartate + ATP = 2-(N(omega)-L-arginino)succinate + AMP + diphosphate + H(+). It participates in amino-acid biosynthesis; L-arginine biosynthesis; L-arginine from L-ornithine and carbamoyl phosphate: step 2/3. The protein is Argininosuccinate synthase of Caldanaerobacter subterraneus subsp. tengcongensis (strain DSM 15242 / JCM 11007 / NBRC 100824 / MB4) (Thermoanaerobacter tengcongensis).